Here is a 957-residue protein sequence, read N- to C-terminus: Bifunctional glutamine synthetase adenylyltransferase/adenylyl-removing enzyme (957 aa).

The interval 1–447 (MFSQLDFTGL…IFNQLIGEEE (447 aa)) is adenylyl removase. The interval 454 to 957 (VNEQLAIWQD…IWQQIFTDNE (504 aa)) is adenylyl transferase.

This sequence belongs to the GlnE family. The cofactor is Mg(2+).

It catalyses the reaction [glutamine synthetase]-O(4)-(5'-adenylyl)-L-tyrosine + phosphate = [glutamine synthetase]-L-tyrosine + ADP. The catalysed reaction is [glutamine synthetase]-L-tyrosine + ATP = [glutamine synthetase]-O(4)-(5'-adenylyl)-L-tyrosine + diphosphate. Involved in the regulation of glutamine synthetase GlnA, a key enzyme in the process to assimilate ammonia. When cellular nitrogen levels are high, the C-terminal adenylyl transferase (AT) inactivates GlnA by covalent transfer of an adenylyl group from ATP to specific tyrosine residue of GlnA, thus reducing its activity. Conversely, when nitrogen levels are low, the N-terminal adenylyl removase (AR) activates GlnA by removing the adenylyl group by phosphorolysis, increasing its activity. The regulatory region of GlnE binds the signal transduction protein PII (GlnB) which indicates the nitrogen status of the cell. This chain is Bifunctional glutamine synthetase adenylyltransferase/adenylyl-removing enzyme, found in Haemophilus ducreyi (strain 35000HP / ATCC 700724).